The sequence spans 113 residues: UPF0122 protein PEPE_0845 (113 aa).

This sequence belongs to the UPF0122 family.

In terms of biological role, might take part in the signal recognition particle (SRP) pathway. This is inferred from the conservation of its genetic proximity to ftsY/ffh. May be a regulatory protein. The sequence is that of UPF0122 protein PEPE_0845 from Pediococcus pentosaceus (strain ATCC 25745 / CCUG 21536 / LMG 10740 / 183-1w).